Reading from the N-terminus, the 360-residue chain is Photosystem II protein D1 (360 aa).

The next 3 helical transmembrane spans lie at 29–46, 118–133, and 142–156; these read YIGW…TATS, HFLL…EWEL, and WIFV…AASA. His-118 is a chlorophyll a binding site. Pheophytin a is bound at residue Tyr-126. [CaMn4O5] cluster is bound by residues Asp-170 and Glu-189. The helical transmembrane segment at 197–218 threads the bilayer; that stretch reads FHMAGVAGVFGGSLFSAMHGSL. His-198 contributes to the chlorophyll a binding site. A quinone-binding positions include His-215 and 264 to 265; that span reads SF. His-215 contacts Fe cation. His-272 is a binding site for Fe cation. Residues 274-288 traverse the membrane as a helical segment; sequence FLAAWPVVGIWLTAM. 4 residues coordinate [CaMn4O5] cluster: His-332, Glu-333, Asp-342, and Ala-344. Positions 345–360 are excised as a propeptide; that stretch reads SGDVLPVALNAPAVNG.

Belongs to the reaction center PufL/M/PsbA/D family. PSII is composed of 1 copy each of membrane proteins PsbA, PsbB, PsbC, PsbD, PsbE, PsbF, PsbH, PsbI, PsbJ, PsbK, PsbL, PsbM, PsbT, PsbX, PsbY, PsbZ, Psb30/Ycf12, at least 3 peripheral proteins of the oxygen-evolving complex and a large number of cofactors. It forms dimeric complexes. The D1/D2 heterodimer binds P680, chlorophylls that are the primary electron donor of PSII, and subsequent electron acceptors. It shares a non-heme iron and each subunit binds pheophytin, quinone, additional chlorophylls, carotenoids and lipids. D1 provides most of the ligands for the Mn4-Ca-O5 cluster of the oxygen-evolving complex (OEC). There is also a Cl(-1) ion associated with D1 and D2, which is required for oxygen evolution. The PSII complex binds additional chlorophylls, carotenoids and specific lipids. serves as cofactor. Tyr-161 forms a radical intermediate that is referred to as redox-active TyrZ, YZ or Y-Z. Post-translationally, C-terminally processed by CTPA; processing is essential to allow assembly of the oxygen-evolving complex and thus photosynthetic growth.

It is found in the plastid. The protein localises to the chloroplast thylakoid membrane. The catalysed reaction is 2 a plastoquinone + 4 hnu + 2 H2O = 2 a plastoquinol + O2. Functionally, photosystem II (PSII) is a light-driven water:plastoquinone oxidoreductase that uses light energy to abstract electrons from H(2)O, generating O(2) and a proton gradient subsequently used for ATP formation. It consists of a core antenna complex that captures photons, and an electron transfer chain that converts photonic excitation into a charge separation. The D1/D2 (PsbA/PsbD) reaction center heterodimer binds P680, the primary electron donor of PSII as well as several subsequent electron acceptors. In Trieres chinensis (Marine centric diatom), this protein is Photosystem II protein D1.